The following is a 121-amino-acid chain: Small ribosomal subunit protein uS13 (121 aa).

The disordered stretch occupies residues 93–121 (KGLPLRGQKTKTNARTRKGPKKTIANKKK).

It belongs to the universal ribosomal protein uS13 family. Part of the 30S ribosomal subunit. Forms a loose heterodimer with protein S19. Forms two bridges to the 50S subunit in the 70S ribosome.

Functionally, located at the top of the head of the 30S subunit, it contacts several helices of the 16S rRNA. In the 70S ribosome it contacts the 23S rRNA (bridge B1a) and protein L5 of the 50S subunit (bridge B1b), connecting the 2 subunits; these bridges are implicated in subunit movement. Contacts the tRNAs in the A and P-sites. In Clostridium perfringens (strain ATCC 13124 / DSM 756 / JCM 1290 / NCIMB 6125 / NCTC 8237 / Type A), this protein is Small ribosomal subunit protein uS13.